A 204-amino-acid polypeptide reads, in one-letter code: Holliday junction branch migration complex subunit RuvA (204 aa).

A domain I region spans residues methionine 1 to serine 64. The domain II stretch occupies residues histidine 65–lysine 143. The segment at serine 144 to leucine 155 is flexible linker. The tract at residues aspartate 156–leucine 204 is domain III.

This sequence belongs to the RuvA family. Homotetramer. Forms an RuvA(8)-RuvB(12)-Holliday junction (HJ) complex. HJ DNA is sandwiched between 2 RuvA tetramers; dsDNA enters through RuvA and exits via RuvB. An RuvB hexamer assembles on each DNA strand where it exits the tetramer. Each RuvB hexamer is contacted by two RuvA subunits (via domain III) on 2 adjacent RuvB subunits; this complex drives branch migration. In the full resolvosome a probable DNA-RuvA(4)-RuvB(12)-RuvC(2) complex forms which resolves the HJ.

It is found in the cytoplasm. Functionally, the RuvA-RuvB-RuvC complex processes Holliday junction (HJ) DNA during genetic recombination and DNA repair, while the RuvA-RuvB complex plays an important role in the rescue of blocked DNA replication forks via replication fork reversal (RFR). RuvA specifically binds to HJ cruciform DNA, conferring on it an open structure. The RuvB hexamer acts as an ATP-dependent pump, pulling dsDNA into and through the RuvAB complex. HJ branch migration allows RuvC to scan DNA until it finds its consensus sequence, where it cleaves and resolves the cruciform DNA. This chain is Holliday junction branch migration complex subunit RuvA, found in Histophilus somni (strain 2336) (Haemophilus somnus).